A 410-amino-acid chain; its full sequence is Dual-specificity RNA methyltransferase RlmN (410 aa).

Glu123 functions as the Proton acceptor in the catalytic mechanism. The Radical SAM core domain occupies 129–378; it reads EEGRGTLCIS…IRTPRGRDIL (250 aa). Cys136 and Cys381 are joined by a disulfide. 3 residues coordinate [4Fe-4S] cluster: Cys143, Cys147, and Cys150. Residues 207 to 208, Ser239, 261 to 263, and Asn338 each bind S-adenosyl-L-methionine; these read GE and SLH. Cys381 serves as the catalytic S-methylcysteine intermediate.

This sequence belongs to the radical SAM superfamily. RlmN family. The cofactor is [4Fe-4S] cluster.

It is found in the cytoplasm. The catalysed reaction is adenosine(2503) in 23S rRNA + 2 reduced [2Fe-2S]-[ferredoxin] + 2 S-adenosyl-L-methionine = 2-methyladenosine(2503) in 23S rRNA + 5'-deoxyadenosine + L-methionine + 2 oxidized [2Fe-2S]-[ferredoxin] + S-adenosyl-L-homocysteine. It catalyses the reaction adenosine(37) in tRNA + 2 reduced [2Fe-2S]-[ferredoxin] + 2 S-adenosyl-L-methionine = 2-methyladenosine(37) in tRNA + 5'-deoxyadenosine + L-methionine + 2 oxidized [2Fe-2S]-[ferredoxin] + S-adenosyl-L-homocysteine. Functionally, specifically methylates position 2 of adenine 2503 in 23S rRNA and position 2 of adenine 37 in tRNAs. m2A2503 modification seems to play a crucial role in the proofreading step occurring at the peptidyl transferase center and thus would serve to optimize ribosomal fidelity. This chain is Dual-specificity RNA methyltransferase RlmN, found in Mesorhizobium japonicum (strain LMG 29417 / CECT 9101 / MAFF 303099) (Mesorhizobium loti (strain MAFF 303099)).